We begin with the raw amino-acid sequence, 175 residues long: Respiratory supercomplex factor 1-B, mitochondrial (175 aa).

The 92-residue stretch at 3–94 folds into the HIG1 domain; it reads DQADVLADPD…TERKQRREFE (92 aa). 2 helical membrane-spanning segments follow: residues 30–46 and 66–83; these read PLIP…LYRA and IYAQ…GMYY. Residues 83–115 adopt a coiled-coil conformation; it reads YKTERKQRREFEKKVEERKAQEKRDAWLRELEA.

This sequence belongs to the RCF1 family. Associates with the respiratory chain complex III/complex IV supercomplex.

It is found in the mitochondrion membrane. Its function is as follows. Cytochrome c oxidase subunit which plays a role in assembly of respiratory supercomplexes. In Talaromyces marneffei (strain ATCC 18224 / CBS 334.59 / QM 7333) (Penicillium marneffei), this protein is Respiratory supercomplex factor 1-B, mitochondrial (rcf1-B).